The following is a 574-amino-acid chain: Sulfate adenylyltransferase (574 aa).

Residues 1–170 (MANTPHGGVL…LEAINRLEHY (170 aa)) form an N-terminal region. Residues 171–395 (DFLDLRFTPS…LREENPLPAE (225 aa)) form a catalytic region. A sulfate-binding site is contributed by Gln198. ATP-binding positions include 198–201 (QTRN) and 292–295 (GRDH). Active-site residues include Thr199, Arg200, and Asn201. A sulfate-binding site is contributed by Arg200. Sulfate is bound at residue Ala296. Met334 provides a ligand contact to ATP. Positions 396-574 (KGFTVFMTGY…LESNGLLDRL (179 aa)) are allosteric regulation domain; adenylyl-sulfate kinase-like. 3'-phosphoadenylyl sulfate is bound by residues 435–438 (ENVR), Arg452, 478–479 (IA), and Lys516.

This sequence in the N-terminal section; belongs to the sulfate adenylyltransferase family. In the C-terminal section; belongs to the APS kinase family. As to quaternary structure, homohexamer. Dimer of trimers.

Its subcellular location is the cytoplasm. The catalysed reaction is sulfate + ATP + H(+) = adenosine 5'-phosphosulfate + diphosphate. It functions in the pathway sulfur metabolism; hydrogen sulfide biosynthesis; sulfite from sulfate: step 1/3. Allosterically inhibited by 3'-phosphoadenosine 5'-phosphosulfate (PAPS). Functionally, catalyzes the first intracellular reaction of sulfate assimilation, forming adenosine-5'-phosphosulfate (APS) from inorganic sulfate and ATP. Plays an important role in sulfate activation as a component of the biosynthesis pathway of sulfur-containing amino acids. In Gibberella zeae (strain ATCC MYA-4620 / CBS 123657 / FGSC 9075 / NRRL 31084 / PH-1) (Wheat head blight fungus), this protein is Sulfate adenylyltransferase.